A 206-amino-acid polypeptide reads, in one-letter code: Purine nucleoside phosphorylase aq_167 (206 aa).

3 residues coordinate Zn(2+): H42, C78, and H93.

It belongs to the purine nucleoside phosphorylase YfiH/LACC1 family. Homodimer. The cofactor is Cu(2+). Requires Zn(2+) as cofactor.

The enzyme catalyses adenosine + phosphate = alpha-D-ribose 1-phosphate + adenine. It catalyses the reaction S-methyl-5'-thioadenosine + phosphate = 5-(methylsulfanyl)-alpha-D-ribose 1-phosphate + adenine. The catalysed reaction is inosine + phosphate = alpha-D-ribose 1-phosphate + hypoxanthine. It carries out the reaction adenosine + H2O + H(+) = inosine + NH4(+). Functionally, purine nucleoside enzyme that catalyzes the phosphorolysis of adenosine and inosine nucleosides, yielding D-ribose 1-phosphate and the respective free bases, adenine and hypoxanthine. Also catalyzes the phosphorolysis of S-methyl-5'-thioadenosine into adenine and S-methyl-5-thio-alpha-D-ribose 1-phosphate. Also has adenosine deaminase activity. This chain is Purine nucleoside phosphorylase aq_167, found in Aquifex aeolicus (strain VF5).